The chain runs to 554 residues: MTRLDNARIVRAPRGPALTAKSWLTEAPLRMLMNNLDPDVAERPGDLVVYGGIGRAARDWASFDRIVAALKDLDEDQTLLVQSGKPVGIFRTHPDAPRVLIANSNLVPHWATWAHFHELDRKGLMMYGQMTAGSWIYIGSQGIVQGTYETFVEMGRQHYGGDLAGRWILTAGLGGMGGAQPLAATMAGASCLAVECRASSIEFRLRTGYVDVQARDLDEALALIDESCRARVPRSVALIGNAAEVFAEIQRRGVRPDCVTDQTSAHDPVNGYLPRGWSIAEWEARRESDPDGVAAAAKRSMAEQVRVMLAFHRAGVPTVDYGNNIRQMALEEGVADAFAFPGFVPAYIRPLFCRGVGPFRWCALSGDPEDIYRTDAKVKQLLPDNAHLHRWLDMARDKIRFQGLPARICWVGLGDRHRLGLAFNAMVRSGELKAPIVIGRDHLDSGSVASPNRETEAMRDGSDAVSDWPLLNALLNTASGATWVSLHHGGGVGMGFSQHAGMVIVCDGSEAADRRLERVLWNDPATGVMRHADAGYPEAIACAREQGLVLPSLG.

NAD(+)-binding positions include 51-52 (GG), Gln-129, 175-177 (GMG), Glu-195, 241-242 (NA), 262-266 (QTSAH), 272-273 (YL), and Tyr-321. Residue Cys-409 is part of the active site. Gly-491 is a binding site for NAD(+).

It belongs to the urocanase family. NAD(+) serves as cofactor.

The protein localises to the cytoplasm. The catalysed reaction is 4-imidazolone-5-propanoate = trans-urocanate + H2O. It functions in the pathway amino-acid degradation; L-histidine degradation into L-glutamate; N-formimidoyl-L-glutamate from L-histidine: step 2/3. Its function is as follows. Catalyzes the conversion of urocanate to 4-imidazolone-5-propionate. The protein is Urocanate hydratase of Methylobacterium nodulans (strain LMG 21967 / CNCM I-2342 / ORS 2060).